We begin with the raw amino-acid sequence, 1016 residues long: Coiled-coil domain-containing protein 57 (1016 aa).

The segment at 1 to 503 is centrosomal targeting domain; the sequence is MLPLCSEREL…HGLLPGQEAQ (503 aa). Coiled-coil stretches lie at residues 14–607, 676–700, and 748–775; these read LARK…PVKT, SEVDQVHLEVLELQKQVAELRKHLK, and VTHLQRKLKDAARKILSLRLEREQLLEM. Disordered stretches follow at residues 500 to 519 and 549 to 573; these read QEAQVPPQQHEGEIRADSPS and HLPPAQPEECSNADPDPKAGGDSTP. The interval 604–1016 is microtubule binding domain; it reads PVKTSVATAD…SRIRNYNLKD (413 aa). 2 disordered regions span residues 781 to 921 and 933 to 1016; these read AEQG…LASS and GSSP…NLKD. 2 stretches are compositionally biased toward polar residues: residues 846–859 and 934–945; these read QPHSAQVGSKTNTP and SSPSGVPSQDNS.

As to quaternary structure, interacts with CEP63; the interaction is required for their location to proximal end of centrioles. Interacts with microtubules.

Its subcellular location is the cytoplasm. The protein localises to the cytoskeleton. The protein resides in the microtubule organizing center. It is found in the centrosome. It localises to the centriolar satellite. Its subcellular location is the centriole. The protein localises to the spindle. Pleiotropic regulator of centriole duplication, mitosis, and ciliogenesis. Critical interface between centrosome and microtubule-mediated cellular processes. Centriole duplication protein required for recruitment of CEP63, CEP152, and PLK4 to the centrosome. Independent of its centrosomal targeting, localizes to and interacts with microtubules and regulates microtubule nucleation, stability, and mitotic progression. The protein is Coiled-coil domain-containing protein 57 of Mus musculus (Mouse).